A 298-amino-acid polypeptide reads, in one-letter code: MKILWAALVLTLLAGCRADVEPEVEVRETAVWQSGQPWELALSRFWDYLRWVQTLSDQVQEELLSSQVTQELTLLMEDTMKELKAYKSELEKEVGPMAEDTKARLSKELQGAQARLAGDMEEVRNRLSQYRSEVQAMLGQSSEELRARLASHLRKLRKRLQRDAEELQKRLAVYKAGAQEGAERGVSAIRERLGSLMEQGRLQALTSHPLRERAQAWGEQVRGRLEKVGSQARDRLEEVREQMEEVRVKVEEQTEAFQARLKSWFEPMVEDLRRQWAELIEKVQVAVGASTSPPSQKS.

The signal sequence occupies residues 1-18 (MKILWAALVLTLLAGCRA). 6 repeat units span residues 74–95 (LLME…KEVG), 96–117 (PMAE…ARLA), 118–139 (GDME…AMLG), 140–161 (QSSE…KRLQ), 162–183 (RDAE…EGAE), and 223–244 (GRLE…EQME). The tract at residues 74-244 (LLMEDTMKEL…RLEEVREQME (171 aa)) is 8 X 22 AA approximate tandem repeats. At Met-137 the chain carries Methionine sulfoxide. A Phosphoserine modification is found at Ser-141. The LDL and other lipoprotein receptors binding stretch occupies residues 152–162 (HLRKLRKRLQR). 156–159 (LRKR) contributes to the heparin binding site. The tract at residues 204 to 272 (ALTSHPLRER…SWFEPMVEDL (69 aa)) is lipid-binding and lipoprotein association. Position 218–225 (218–225 (GEQVRGRL)) interacts with heparin. Residues 260–272 (RLKSWFEPMVEDL) are specificity for association with VLDL.

The protein belongs to the apolipoprotein A1/A4/E family. In terms of assembly, homotetramer. May interact with ABCA1; functionally associated with ABCA1 in the biogenesis of HDLs. May interact with APP/A4 amyloid-beta peptide; the interaction is extremely stable in vitro but its physiological significance is unclear. May interact with MAPT. May interact with MAP2. In the cerebrospinal fluid, interacts with secreted SORL1. Interacts with PMEL; this allows the loading of PMEL luminal fragment on ILVs to induce fibril nucleation. Post-translationally, APOE exists as multiple glycosylated and sialylated glycoforms within cells and in plasma. The extent of glycosylation and sialylation are tissue and context specific. In terms of processing, glycated in plasma VLDL. Phosphorylated by FAM20C in the extracellular medium.

It localises to the secreted. It is found in the extracellular space. Its subcellular location is the extracellular matrix. The protein localises to the extracellular vesicle. The protein resides in the endosome. It localises to the multivesicular body. Functionally, APOE is an apolipoprotein, a protein associating with lipid particles, that mainly functions in lipoprotein-mediated lipid transport between organs via the plasma and interstitial fluids. APOE is a core component of plasma lipoproteins and is involved in their production, conversion and clearance. Apolipoproteins are amphipathic molecules that interact both with lipids of the lipoprotein particle core and the aqueous environment of the plasma. As such, APOE associates with chylomicrons, chylomicron remnants, very low density lipoproteins (VLDL) and intermediate density lipoproteins (IDL) but shows a preferential binding to high-density lipoproteins (HDL). It also binds a wide range of cellular receptors including the LDL receptor/LDLR, the LDL receptor-related proteins LRP1, LRP2 and LRP8 and the very low-density lipoprotein receptor/VLDLR that mediate the cellular uptake of the APOE-containing lipoprotein particles. Finally, APOE also has a heparin-binding activity and binds heparan-sulfate proteoglycans on the surface of cells, a property that supports the capture and the receptor-mediated uptake of APOE-containing lipoproteins by cells. A main function of APOE is to mediate lipoprotein clearance through the uptake of chylomicrons, VLDLs, and HDLs by hepatocytes. APOE is also involved in the biosynthesis by the liver of VLDLs as well as their uptake by peripheral tissues ensuring the delivery of triglycerides and energy storage in muscle, heart and adipose tissues. By participating in the lipoprotein-mediated distribution of lipids among tissues, APOE plays a critical role in plasma and tissues lipid homeostasis. APOE is also involved in two steps of reverse cholesterol transport, the HDLs-mediated transport of cholesterol from peripheral tissues to the liver, and thereby plays an important role in cholesterol homeostasis. First, it is functionally associated with ABCA1 in the biogenesis of HDLs in tissues. Second, it is enriched in circulating HDLs and mediates their uptake by hepatocytes. APOE also plays an important role in lipid transport in the central nervous system, regulating neuron survival and sprouting. The chain is Apolipoprotein E (APOE) from Hydrochoerus hydrochaeris (Capybara).